A 107-amino-acid polypeptide reads, in one-letter code: UPF0145 protein YbjQ (107 aa).

The protein belongs to the UPF0145 family.

This chain is UPF0145 protein YbjQ, found in Salmonella gallinarum (strain 287/91 / NCTC 13346).